A 143-amino-acid chain; its full sequence is Trypsin inhibitor CMc (143 aa).

Positions 1–24 (MASCSQHLLSAVAIFSVLAGVATA) are cleaved as a signal peptide.

The protein belongs to the protease inhibitor I6 (cereal trypsin/alpha-amylase inhibitor) family. In terms of tissue distribution, endosperm.

It localises to the secreted. Its function is as follows. Trypsin inhibitor. No alpha-amylase inhibition detected. The sequence is that of Trypsin inhibitor CMc (ITR2) from Hordeum vulgare (Barley).